Consider the following 710-residue polypeptide: DNA topoisomerase 1 (710 aa).

Positions Met-1–Val-22 are disordered. Basic residues predominate over residues Ser-7 to Val-22. The region spanning Lys-26–Ile-136 is the Toprim domain. Mg(2+)-binding residues include Glu-32 and Asp-105. A Topo IA-type catalytic domain is found at Asp-152–Leu-574. The segment at Ser-186 to Gln-191 is interaction with DNA. Residue Tyr-321 is the O-(5'-phospho-DNA)-tyrosine intermediate of the active site. C4-type zinc fingers lie at residues Cys-595–Cys-621 and Cys-635–Cys-663. The C4-type 3; atypical zinc finger occupies Cys-676–Cys-702.

This sequence belongs to the type IA topoisomerase family. As to quaternary structure, monomer. Requires Mg(2+) as cofactor.

It carries out the reaction ATP-independent breakage of single-stranded DNA, followed by passage and rejoining.. Releases the supercoiling and torsional tension of DNA, which is introduced during the DNA replication and transcription, by transiently cleaving and rejoining one strand of the DNA duplex. Introduces a single-strand break via transesterification at a target site in duplex DNA. The scissile phosphodiester is attacked by the catalytic tyrosine of the enzyme, resulting in the formation of a DNA-(5'-phosphotyrosyl)-enzyme intermediate and the expulsion of a 3'-OH DNA strand. The free DNA strand then undergoes passage around the unbroken strand, thus removing DNA supercoils. Finally, in the religation step, the DNA 3'-OH attacks the covalent intermediate to expel the active-site tyrosine and restore the DNA phosphodiester backbone. The polypeptide is DNA topoisomerase 1 (Lactococcus lactis subsp. lactis (strain IL1403) (Streptococcus lactis)).